Reading from the N-terminus, the 441-residue chain is MALNFKDKVVIVTGAGGGIGKVYALEFAKRGAKVVVNDLGGSHTGQGSSSKAADKVVEEIKAAGGTAVANYDSVEDGEKIVQTAMDSFGGVDILINNAGILRDVSFGKMTDGDWDLVYRVHAKGAYKLSRAAWNHMREKNFGRIIMTSSAAGLYGNFGQANYGSMKMALVGLSNTLAQEGKSKNIHCNTIAPIAASRLTESVMPPEILEQMKPDYIVPLVLYLCHQDTTETGGVFEVGAGWVSKVRLQRSAGVYMKDLTPEKIKDNWAQIESFDNPSYPTSASESVSGILAAVNSKPADGESVLVRPPKVAVPKALAATPSGSVVVDGYNASKIFTTIQGNIGAKGAELVKKINGIYLINIKKGTNTQAWALDLKNGSGSIVVGAGSTKPNVTITVSDEDFVDIMTGKLNAQSAFTKGKLKISGNMGLATKLGALMQGSKL.

The segment at 1-302 (MALNFKDKVV…VNSKPADGES (302 aa)) is 3-hydroxyacyl-CoA dehydrogenase. Residues 11–35 (IVTGAGGGIGKVYALEFAKRGAKVV), isoleucine 19, aspartate 38, 73–74 (SV), and asparagine 97 contribute to the NAD(+) site. Residue serine 149 participates in substrate binding. The active-site Proton acceptor is tyrosine 162. Residues 162 to 166 (YGSMK) and 194 to 197 (AASR) each bind NAD(+). Residues 331–440 (ASKIFTTIQG…KLGALMQGSK (110 aa)) form the SCP2 domain. Glutamine 412 contacts substrate.

It belongs to the short-chain dehydrogenases/reductases (SDR) family.

It localises to the peroxisome. It carries out the reaction a (3S)-3-hydroxyacyl-CoA + NAD(+) = a 3-oxoacyl-CoA + NADH + H(+). It functions in the pathway lipid metabolism; fatty acid beta-oxidation. Functionally, enzyme acting on the peroxisomal beta-oxidation pathway for fatty acids. Protects the cells from the increase of the harmful xenobiotic fatty acids incorporated from their diets and optimizes cellular lipid composition for proper development. This Dictyostelium discoideum (Social amoeba) protein is Peroxisomal multifunctional enzyme A (mfeA).